Reading from the N-terminus, the 1544-residue chain is GATOR complex protein Iml1 (1544 aa).

Disordered stretches follow at residues 615–649 and 1037–1072; these read QAVP…CENG and RRHS…EKRP. Polar residues-rich tracts occupy residues 623-639 and 1041-1057; these read QAGQ…NNNN and TSII…TNSP. Residues 1058–1072 show a composition bias toward basic and acidic residues; sequence FRERVGSNRLPEKRP.

Belongs to the IML1 family. In terms of assembly, component of the GATOR complex consisting of mio, Nup44A/Seh1, Im11, Nplr3, Nplr2, Wdr24, Wdr59 and Sec13. Within the GATOR complex, probable component of the GATOR1 subcomplex which is likely composed of Iml1, Nplr2 and Nplr3.

Its function is as follows. An essential component of the GATOR subcomplex GATOR1 which functions as an inhibitor of the amino acid-sensing branch of the TORC1 signaling pathway. The two GATOR subcomplexes, GATOR1 and GATOR2, regulate the TORC1 pathway in order to mediate metabolic homeostasis, female gametogenesis and the response to amino acid limitation and complete starvation. The function of GATOR1 in negatively regulating the TORC1 pathway is essential for maintaining baseline levels of TORC1 activity under nutrient rich conditions, and for promoting survival during amino acid or complete starvation by inhibiting TORC1-dependent cell growth and promoting catabolic metabolism and autophagy. GATOR1 and GATOR2 act at different stages of oogenesis to regulate TORC1 in order to control meiotic entry and promote oocyte growth and development. After exactly four mitotic cyst divisions, the GATOR1 complex members (Iml1, Nprl2 and Nprl3) down-regulate TORC1 to slow cellular metabolism and promote the mitotic/meiotic transition. At later stages of oogenesis, the mio and Nup44A components of the GATOR2 complex inhibit GATOR1 and thus activate TORC1 to promote meiotic progression, and drive oocyte growth and development. This chain is GATOR complex protein Iml1, found in Drosophila melanogaster (Fruit fly).